The following is a 511-amino-acid chain: Maturase K (511 aa).

Belongs to the intron maturase 2 family. MatK subfamily.

It is found in the plastid. Its subcellular location is the chloroplast. Usually encoded in the trnK tRNA gene intron. Probably assists in splicing its own and other chloroplast group II introns. This Hordeum jubatum (Foxtail barley) protein is Maturase K.